Consider the following 317-residue polypeptide: 8-oxo-(d)GTP phosphatase (317 aa).

The 134-residue stretch at 15 to 148 folds into the Nudix hydrolase domain; the sequence is RIVYAAGAVL…DRKVLCRFAK (134 aa). Residues 43–46, Asp48, and 53–55 each bind substrate; these read RPRY and KGK. Residues Lys53, Glu69, and Glu73 each contribute to the Mg(2+) site. The short motif at 54–75 is the Nudix box element; the sequence is GKVDPGETAPVGAVREILEETG. Substrate-binding residues include Tyr89, Lys99, Glu118, and Tyr136. Glu118 lines the Mg(2+) pocket.

The protein belongs to the Nudix hydrolase family. Mg(2+) is required as a cofactor.

It carries out the reaction 8-oxo-dGTP + H2O = 8-oxo-dGDP + phosphate + H(+). The catalysed reaction is 8-oxo-GTP + H2O = 8-oxo-GDP + phosphate + H(+). Its function is as follows. Catalyzes the conversion of 8-oxo-dGTP to 8-oxo-dGDP, and 8-oxo-GTP to 8-oxo-GDP. This chain is 8-oxo-(d)GTP phosphatase, found in Mycobacterium tuberculosis (strain CDC 1551 / Oshkosh).